Reading from the N-terminus, the 982-residue chain is Protein cramped (982 aa).

Disordered stretches follow at residues 1 to 37 (MEELSKQPPPPPLTQPPPPSSSVSIEEPLPNGKGGGA), 71 to 111 (QKMK…GSGK), 323 to 349 (SLPSAASNNNNNNNETEPLQPSVASLD), 407 to 456 (NKRL…SSGD), and 822 to 851 (GTSSAGISTSGSKPDCSMNAMTASQDQEPG). Positions 7-20 (QPPPPPLTQPPPPS) are enriched in pro residues. Residues 21-30 (SSVSIEEPLP) are compositionally biased toward low complexity. Positions 86–98 (SEREPNKKEEKAA) are enriched in basic and acidic residues. The segment covering 100–111 (KTPSQLKTGSGK) has biased composition (polar residues). Residues 109 to 173 (SGKTTWTNVE…HYYQTHHKIC (65 aa)) enclose the SANT domain. Residues 410-425 (LRTESGSEKRSPETKK) show a composition bias toward basic and acidic residues. Ser431 and Ser437 each carry phosphoserine. Low complexity predominate over residues 822–833 (GTSSAGISTSGS).

The protein belongs to the cramped family. In terms of tissue distribution, ubiquitously expressed throughout embryonic development. High expression is detected in CNS and gonads.

Its subcellular location is the nucleus. Its function is as follows. Polycomb group (Pc-G) genes are needed to maintain expression patterns of the homeotic selector genes of the Antennapedia (Antp-C) and Bithorax (Bx-C) complexes, and hence for the maintenance of segmental determination. Can act as a modifier of position effect variegation (PEV). The protein is Protein cramped (crm) of Drosophila melanogaster (Fruit fly).